We begin with the raw amino-acid sequence, 376 residues long: Palmitoyl-[acyl-carrier-protein] 4-desaturase 2, chloroplastic (376 aa).

The N-terminal 33 residues, 1–33 (MELHLALRASPLPAADPGRRPPPPRGNFATNCT), are a transit peptide targeting the chloroplast. Fe cation-binding residues include Glu-114, Glu-149, His-152, Glu-202, Glu-235, and His-238.

Belongs to the fatty acid desaturase type 2 family. In terms of assembly, homodimer. It depends on Fe(2+) as a cofactor. In terms of tissue distribution, preferentially expressed in the flower labellum.

The protein resides in the plastid. Its subcellular location is the chloroplast stroma. The enzyme catalyses hexadecanoyl-[ACP] + 2 reduced [2Fe-2S]-[ferredoxin] + O2 + 2 H(+) = (4Z)-hexadecenoyl-[ACP] + 2 oxidized [2Fe-2S]-[ferredoxin] + 2 H2O. It carries out the reaction octadecanoyl-[ACP] + 2 reduced [2Fe-2S]-[ferredoxin] + O2 + 2 H(+) = (9Z)-octadecenoyl-[ACP] + 2 oxidized [2Fe-2S]-[ferredoxin] + 2 H2O. The protein operates within lipid metabolism; fatty acid metabolism. Its function is as follows. Converts stearoyl-ACP to oleoyl-ACP by introduction of a cis double bond between carbons 9 and 10 of the acyl chain. Converts palmitoyl-ACP to (4Z)-hexadec-4-enoyl-ACP by introduction of a cis double bond between carbons 4 and 5 of the acyl chain. Catalyzes the desaturation of saturated fatty acid 18:0 and 16:0 to generate 18:1 (delta-9) and 16:1 (delta-4) intermediates, expected to give rise to 9-alkenes and 12-alkenes, respectively. This Ophrys arachnitiformis subsp. archipelagi (Orchid) protein is Palmitoyl-[acyl-carrier-protein] 4-desaturase 2, chloroplastic (SAD2).